The chain runs to 68 residues: Suppressor of RNA silencing (68 aa).

Residues 23–43 traverse the membrane as a helical segment; it reads LLTMSGAYVNVCVCIVFFILV.

The protein belongs to the virgaviridae suppressor of RNA silencing family.

The protein resides in the host endoplasmic reticulum membrane. Its function is as follows. Suppressor of RNA-mediated gene silencing, also known as post-transcriptional gene silencing (PTGS), a mechanism of plant viral defense that performs sequence-specific inhibition of viral mRNAs expression. The RNA silencing suppression activity is variable depending on the origin of the isolate. The polypeptide is Suppressor of RNA silencing (8K protein) (Solanum nigrum (Black nightshade)).